Here is a 147-residue protein sequence, read N- to C-terminus: D-aminoacyl-tRNA deacylase (147 aa).

The Gly-cisPro motif, important for rejection of L-amino acids motif lies at 136–137; sequence GP.

It belongs to the DTD family. As to quaternary structure, homodimer.

The protein resides in the cytoplasm. It carries out the reaction glycyl-tRNA(Ala) + H2O = tRNA(Ala) + glycine + H(+). It catalyses the reaction a D-aminoacyl-tRNA + H2O = a tRNA + a D-alpha-amino acid + H(+). In terms of biological role, an aminoacyl-tRNA editing enzyme that deacylates mischarged D-aminoacyl-tRNAs. Also deacylates mischarged glycyl-tRNA(Ala), protecting cells against glycine mischarging by AlaRS. Acts via tRNA-based rather than protein-based catalysis; rejects L-amino acids rather than detecting D-amino acids in the active site. By recycling D-aminoacyl-tRNA to D-amino acids and free tRNA molecules, this enzyme counteracts the toxicity associated with the formation of D-aminoacyl-tRNA entities in vivo and helps enforce protein L-homochirality. This chain is D-aminoacyl-tRNA deacylase, found in Streptococcus thermophilus (strain CNRZ 1066).